The following is a 102-amino-acid chain: NADH-quinone oxidoreductase subunit K (102 aa).

Helical transmembrane passes span 5-25 (IAHYLTVSAVLFTLGVFGIFL), 31-51 (IVILMSVELILLAVNINFVAF), and 66-86 (FVLTVAAAEAAIGLAILVVFF).

Belongs to the complex I subunit 4L family. As to quaternary structure, NDH-1 is composed of 14 different subunits. Subunits NuoA, H, J, K, L, M, N constitute the membrane sector of the complex.

Its subcellular location is the cell inner membrane. The enzyme catalyses a quinone + NADH + 5 H(+)(in) = a quinol + NAD(+) + 4 H(+)(out). Its function is as follows. NDH-1 shuttles electrons from NADH, via FMN and iron-sulfur (Fe-S) centers, to quinones in the respiratory chain. The immediate electron acceptor for the enzyme in this species is believed to be ubiquinone. Couples the redox reaction to proton translocation (for every two electrons transferred, four hydrogen ions are translocated across the cytoplasmic membrane), and thus conserves the redox energy in a proton gradient. This chain is NADH-quinone oxidoreductase subunit K, found in Mesorhizobium japonicum (strain LMG 29417 / CECT 9101 / MAFF 303099) (Mesorhizobium loti (strain MAFF 303099)).